Reading from the N-terminus, the 449-residue chain is Phosphoglucosamine mutase (449 aa).

Catalysis depends on S100, which acts as the Phosphoserine intermediate. Positions 100, 241, 243, and 245 each coordinate Mg(2+). At S100 the chain carries Phosphoserine.

It belongs to the phosphohexose mutase family. The cofactor is Mg(2+). In terms of processing, activated by phosphorylation.

The enzyme catalyses alpha-D-glucosamine 1-phosphate = D-glucosamine 6-phosphate. In terms of biological role, catalyzes the conversion of glucosamine-6-phosphate to glucosamine-1-phosphate. The sequence is that of Phosphoglucosamine mutase from Clostridium botulinum (strain Kyoto / Type A2).